A 454-amino-acid chain; its full sequence is ADP-specific phosphofructokinase (454 aa).

The ADPK domain maps to 1–452 (MIDEVRELGI…FLSYLSLLRR (452 aa)). Mg(2+) contacts are provided by Glu263, Glu293, and Asp436. The Proton acceptor role is filled by Asp436.

It belongs to the carbohydrate kinase PfkC family. In terms of assembly, homotetramer. It depends on Mg(2+) as a cofactor.

It localises to the cytoplasm. The catalysed reaction is beta-D-fructose 6-phosphate + ADP = beta-D-fructose 1,6-bisphosphate + AMP + H(+). Its pathway is carbohydrate degradation; glycolysis. With respect to regulation, inhibited by AMP and ATP. Functionally, catalyzes the phosphorylation of fructose 6-phosphate to fructose 1,6-bisphosphate using ADP as the phosphate donor. As a phosphoryl group donor, ADP can be replaced by GDP, ATP, and GTP to a limited extent. The protein is ADP-specific phosphofructokinase (pfkC) of Pyrococcus furiosus (strain ATCC 43587 / DSM 3638 / JCM 8422 / Vc1).